Consider the following 265-residue polypeptide: Thiazole synthase (265 aa).

Lysine 106 (schiff-base intermediate with DXP) is an active-site residue. 1-deoxy-D-xylulose 5-phosphate contacts are provided by residues glycine 167, alanine 193–glycine 194, and asparagine 215–threonine 216. The disordered stretch occupies residues glycine 245–serine 265.

This sequence belongs to the ThiG family. In terms of assembly, homotetramer. Forms heterodimers with either ThiH or ThiS.

It localises to the cytoplasm. It catalyses the reaction [ThiS sulfur-carrier protein]-C-terminal-Gly-aminoethanethioate + 2-iminoacetate + 1-deoxy-D-xylulose 5-phosphate = [ThiS sulfur-carrier protein]-C-terminal Gly-Gly + 2-[(2R,5Z)-2-carboxy-4-methylthiazol-5(2H)-ylidene]ethyl phosphate + 2 H2O + H(+). The protein operates within cofactor biosynthesis; thiamine diphosphate biosynthesis. Its function is as follows. Catalyzes the rearrangement of 1-deoxy-D-xylulose 5-phosphate (DXP) to produce the thiazole phosphate moiety of thiamine. Sulfur is provided by the thiocarboxylate moiety of the carrier protein ThiS. In vitro, sulfur can be provided by H(2)S. This Methylobacterium sp. (strain 4-46) protein is Thiazole synthase.